The primary structure comprises 365 residues: 5-hydroxytryptamine receptor 1E (365 aa).

Over 1-21 (MNITNCTTEASMAIRPKTITE) the chain is Extracellular. Residues N2 and N5 are each glycosylated (N-linked (GlcNAc...) asparagine). Residues 22 to 45 (KMLICMTLVVITTLTTLLNLAVIM) form a helical membrane-spanning segment. Residues 46–59 (AIGTTKKLHQPANY) lie on the Cytoplasmic side of the membrane. A helical transmembrane segment spans residues 60-84 (LICSLAVTDLLVAVLVMPLSIIYIV). Topologically, residues 85–92 (MDRWKLGY) are extracellular. The chain crosses the membrane as a helical span at residues 93-118 (FLCEVWLSVDMTCCTCSILHLCVIAL). C95 and C173 form a disulfide bridge. Residues D102 and C106 each coordinate serotonin. A DRY motif; important for ligand-induced conformation changes motif is present at residues 119-121 (DRY). At 119–138 (DRYWAITNAIEYARKRTAKR) the chain is on the cytoplasmic side. The helical transmembrane segment at 139–157 (AALMILTVWTISIFISMPP) threads the bilayer. Over 158–179 (LFWRSHRRLSPPPSQCTIQHDH) the chain is Extracellular. Residues 180–203 (VIYTIYSTLGAFYIPLTLILILYY) form a helical membrane-spanning segment. Residues 204–291 (RIYHAAKSLY…SSTRERKAAR (88 aa)) lie on the Cytoplasmic side of the membrane. Residues 292–316 (ILGLILGAFILSWLPFFIKELIVGL) form a helical membrane-spanning segment. Residues 317–322 (SIYTVS) are Extracellular-facing. The helical transmembrane segment at 323–345 (SEVADFLTWLGYVNSLINPLLYT) threads the bilayer. Positions 340 to 344 (NPLLY) match the NPxxY motif; important for ligand-induced conformation changes and signaling motif. Topologically, residues 346 to 365 (SFNEDFKLAFKKLIRCREHT) are cytoplasmic.

It belongs to the G-protein coupled receptor 1 family. As to expression, detected in brain.

It is found in the cell membrane. G-protein coupled receptor for 5-hydroxytryptamine (serotonin). Also functions as a receptor for various alkaloids and psychoactive substances. Ligand binding causes a conformation change that triggers signaling via guanine nucleotide-binding proteins (G proteins) and modulates the activity of downstream effectors, such as adenylate cyclase. HTR1E is coupled to G(i)/G(o) G alpha proteins and mediates inhibitory neurotransmission by inhibiting adenylate cyclase activity. The protein is 5-hydroxytryptamine receptor 1E of Homo sapiens (Human).